A 605-amino-acid chain; its full sequence is DNA primase (605 aa).

The CHC2-type zinc-finger motif lies at 39–63; it reads CPFHHERTPSFHVVPDKKMYYCFGC. A Toprim domain is found at 257 to 338; that stretch reads RAAIICEGYM…EVRIVELNGG (82 aa). Mg(2+) is bound by residues glutamate 263, aspartate 307, and aspartate 309.

It belongs to the DnaG primase family. In terms of assembly, monomer. Interacts with DnaB. Zn(2+) serves as cofactor. Mg(2+) is required as a cofactor.

It carries out the reaction ssDNA + n NTP = ssDNA/pppN(pN)n-1 hybrid + (n-1) diphosphate.. Its function is as follows. RNA polymerase that catalyzes the synthesis of short RNA molecules used as primers for DNA polymerase during DNA replication. The chain is DNA primase from Treponema pallidum (strain Nichols).